The primary structure comprises 559 residues: Potassium-transporting ATPase potassium-binding subunit (559 aa).

Transmembrane regions (helical) follow at residues 5 to 25 (GFLL…PLGM), 63 to 83 (LLAI…LLML), 131 to 151 (VGLT…VFAL), 173 to 193 (ITLW…IQQG), 254 to 274 (VQML…GEVV), 282 to 302 (AILW…MWAE), 327 to 347 (FGIL…CGAV), 356 to 376 (ALGG…FGGV), 379 to 399 (GLYG…LMVG), 416 to 436 (MIAL…ALAM), 483 to 503 (LLLA…VMAI), and 525 to 545 (ALFI…TFIP).

This sequence belongs to the KdpA family. The system is composed of three essential subunits: KdpA, KdpB and KdpC.

It localises to the cell inner membrane. In terms of biological role, part of the high-affinity ATP-driven potassium transport (or Kdp) system, which catalyzes the hydrolysis of ATP coupled with the electrogenic transport of potassium into the cytoplasm. This subunit binds the periplasmic potassium ions and delivers the ions to the membrane domain of KdpB through an intramembrane tunnel. The protein is Potassium-transporting ATPase potassium-binding subunit of Klebsiella pneumoniae subsp. pneumoniae (strain ATCC 700721 / MGH 78578).